The sequence spans 468 residues: UDP-N-acetylmuramoyl-L-alanine--L-glutamate ligase (468 aa).

Residue 122-128 (GTKGKST) coordinates ATP.

This sequence belongs to the MurCDEF family. MurD2 subfamily.

Its subcellular location is the cytoplasm. The enzyme catalyses UDP-N-acetyl-alpha-D-muramoyl-L-alanine + L-glutamate + ATP = UDP-N-acetyl-alpha-D-muramoyl-L-alanyl-L-glutamate + ADP + phosphate + H(+). Its pathway is cell wall biogenesis; peptidoglycan biosynthesis. In terms of biological role, cell wall formation. Catalyzes the addition of L-glutamate to the nucleotide precursor UDP-N-acetylmuramoyl-L-alanine. Has weak activity with D-glutamate. This Xanthomonas oryzae pv. oryzae (strain MAFF 311018) protein is UDP-N-acetylmuramoyl-L-alanine--L-glutamate ligase.